The chain runs to 950 residues: Kinase suppressor of Ras 2 (950 aa).

The segment at 239 to 296 (PPLESGHRSLPPSPRQRHAVRTPPRTPNIVTTVTPPGTPPMRKKNKLKPPGTPPPSSR) is disordered. A compositionally biased stretch (low complexity) spans 259–273 (RTPPRTPNIVTTVTP). Residues Thr272 and Thr276 each carry the phosphothreonine modification. The Phorbol-ester/DAG-type zinc-finger motif lies at 412 to 456 (KHRFSTKYWMSQTCTVCGKGMLFGLKCKNCKLKCHNKCTKEAPPC). The Zn(2+) site is built by His413, Cys425, Cys428, Cys438, Cys441, His446, Cys449, and Cys456. Position 474 is a phosphoserine; by MARK3 (Ser474). Thr497 carries the phosphothreonine modification. The tract at residues 498 to 556 (LPKTNKINKDHIPVPYQPDSSSNPSSTTSSTPSSPAPPLPPSATPPSPLHPSPQCTRQQ) is disordered. The span at 517–530 (SSSNPSSTTSSTPS) shows a compositional bias: low complexity. The span at 531 to 548 (SPAPPLPPSATPPSPLHP) shows a compositional bias: pro residues. One can recognise a Protein kinase domain in the interval 666-931 (LEIGELIGKG…TKLMDMLEKL (266 aa)). 672–680 (IGKGRFGQV) is a binding site for ATP. The Proton donor/acceptor role is filled by Asp786. Residues Lys788 and Asp803 each contribute to the ATP site.

It belongs to the protein kinase superfamily. TKL Ser/Thr protein kinase family. As to quaternary structure, heterodimerizes (via N-terminus) with BRAF (via N-terminus) in a MAP2K1/MEK1-dependent manner. Interacts with BRAF; this increases the low intrinsic protein kinase activity of KSR2. Interacts with MAP2K1, forming a heterodimer that can dimerize to form a heterotetramer. Interacts with MAP3K8, MAPK, RAS and RAF. Phosphorylated on Ser-474 by MARK3. As to expression, mainly expressed in brain and kidney.

It localises to the cytoplasm. The protein localises to the membrane. It catalyses the reaction L-seryl-[protein] + ATP = O-phospho-L-seryl-[protein] + ADP + H(+). The enzyme catalyses L-threonyl-[protein] + ATP = O-phospho-L-threonyl-[protein] + ADP + H(+). With respect to regulation, kinase activity is inhibited by ASC24. Its function is as follows. Location-regulated scaffold connecting MEK to RAF. Has very low protein kinase activity and can phosphorylate MAP2K1 at several Ser and Thr residues with very low efficiency (in vitro). Acts as MAP2K1/MEK1-dependent allosteric activator of BRAF; upon binding to MAP2K1/MEK1, dimerizes with BRAF and promotes BRAF-mediated phosphorylation of MAP2K1/MEK1. Interaction with BRAF enhances KSR2-mediated phosphorylation of MAP2K1 (in vitro). Blocks MAP3K8 kinase activity and MAP3K8-mediated signaling. Acts as a negative regulator of MAP3K3-mediated activation of ERK, JNK and NF-kappa-B pathways, inhibiting MAP3K3-mediated interleukin-8 production. The protein is Kinase suppressor of Ras 2 of Homo sapiens (Human).